The following is a 158-amino-acid chain: MSEAARETGTELGTADIQTLLELLPHRYPFLMVDRIVEIDRDESCVGIKNVTANEPQFMGHFPDMPVFPGVLLIEGMAQTAGAICCRHIRADGRNTKQVFFMTIDKCKFRKPVTPGDQVRFHMTKLNQRRTMWWFRGEARVDGTLVAEAEISAMLVTE.

Histidine 61 is a catalytic residue.

The protein belongs to the thioester dehydratase family. FabZ subfamily.

It is found in the cytoplasm. The enzyme catalyses a (3R)-hydroxyacyl-[ACP] = a (2E)-enoyl-[ACP] + H2O. Its function is as follows. Involved in unsaturated fatty acids biosynthesis. Catalyzes the dehydration of short chain beta-hydroxyacyl-ACPs and long chain saturated and unsaturated beta-hydroxyacyl-ACPs. In Methylobacterium radiotolerans (strain ATCC 27329 / DSM 1819 / JCM 2831 / NBRC 15690 / NCIMB 10815 / 0-1), this protein is 3-hydroxyacyl-[acyl-carrier-protein] dehydratase FabZ.